We begin with the raw amino-acid sequence, 202 residues long: Small ribosomal subunit protein uS4 (202 aa).

A disordered region spans residues 15–42 (LGDLPGLTRKAAKRSYPPGQHGQARRKR). Positions 90 to 152 (NRLDNVCFRI…KCSKLLAEAN (63 aa)) constitute an S4 RNA-binding domain.

It belongs to the universal ribosomal protein uS4 family. Part of the 30S ribosomal subunit. Contacts protein S5. The interaction surface between S4 and S5 is involved in control of translational fidelity.

One of the primary rRNA binding proteins, it binds directly to 16S rRNA where it nucleates assembly of the body of the 30S subunit. Functionally, with S5 and S12 plays an important role in translational accuracy. This Synechococcus sp. (strain CC9311) protein is Small ribosomal subunit protein uS4.